A 125-amino-acid chain; its full sequence is Fluoride-specific ion channel FluC (125 aa).

Transmembrane regions (helical) follow at residues 4–24 (IALV…VGVW), 35–55 (WGTL…VELV), 68–88 (FLVT…LDAV), and 100–120 (AFYI…GLAL). Na(+) contacts are provided by glycine 75 and threonine 78.

The protein belongs to the fluoride channel Fluc/FEX (TC 1.A.43) family.

Its subcellular location is the cell inner membrane. The catalysed reaction is fluoride(in) = fluoride(out). Its activity is regulated as follows. Na(+) is not transported, but it plays an essential structural role and its presence is essential for fluoride channel function. Fluoride-specific ion channel. Important for reducing fluoride concentration in the cell, thus reducing its toxicity. This chain is Fluoride-specific ion channel FluC, found in Agrobacterium fabrum (strain C58 / ATCC 33970) (Agrobacterium tumefaciens (strain C58)).